The following is a 374-amino-acid chain: DNA-directed RNA polymerase subunit alpha (374 aa).

The alpha N-terminal domain (alpha-NTD) stretch occupies residues Met1–Asp270. The segment at Lys282–Glu374 is alpha C-terminal domain (alpha-CTD).

This sequence belongs to the RNA polymerase alpha chain family. Homodimer. The RNAP catalytic core consists of 2 alpha, 1 beta, 1 beta' and 1 omega subunit. When a sigma factor is associated with the core the holoenzyme is formed, which can initiate transcription.

The catalysed reaction is RNA(n) + a ribonucleoside 5'-triphosphate = RNA(n+1) + diphosphate. DNA-dependent RNA polymerase catalyzes the transcription of DNA into RNA using the four ribonucleoside triphosphates as substrates. The chain is DNA-directed RNA polymerase subunit alpha from Ehrlichia ruminantium (strain Gardel).